The following is a 294-amino-acid chain: Small ribosomal subunit protein uS2 (294 aa).

The tract at residues 232–294 is disordered; sequence RATGTTEAPE…SAAGEADAAK (63 aa). Residues 246 to 259 show a composition bias toward basic and acidic residues; sequence EWERELLEGSKSEE. Residues 260–294 show a composition bias toward low complexity; sequence AAAPAAAEEAPAAAEEAPAAAEATESAAGEADAAK.

The protein belongs to the universal ribosomal protein uS2 family.

The protein is Small ribosomal subunit protein uS2 of Arthrobacter sp. (strain FB24).